The primary structure comprises 255 residues: Serine/threonine-protein phosphatase PP1 (255 aa).

4 residues coordinate Mn(2+): Asp2, His4, Asp30, and Asn62. The active-site Proton donor is the His63. Positions 111 and 186 each coordinate Mn(2+).

The protein belongs to the PPP phosphatase family. PP-1 subfamily. Mn(2+) is required as a cofactor.

The catalysed reaction is O-phospho-L-seryl-[protein] + H2O = L-seryl-[protein] + phosphate. It catalyses the reaction O-phospho-L-threonyl-[protein] + H2O = L-threonyl-[protein] + phosphate. The sequence is that of Serine/threonine-protein phosphatase PP1 from Brassica napus (Rape).